A 540-amino-acid polypeptide reads, in one-letter code: Cytochrome P450 27C1 (540 aa).

C486 is a binding site for heme.

The protein belongs to the cytochrome P450 family. The cofactor is heme. Following L-thyroxine, expressed in the retinal pigment epithelium (at protein level).

It localises to the membrane. It catalyses the reaction all-trans-retinol + 2 reduced [adrenodoxin] + O2 + 2 H(+) = all-trans-3,4-didehydroretinol + 2 oxidized [adrenodoxin] + 2 H2O. In terms of biological role, efficiently catalyzes the conversion of all-trans retinol (also called vitamin A1, the precursor of 11-cis retinal) to 3,4-didehydroretinol (also called vitamin A2, the precursor of 11-cis 3,4-didehydroretinal). Also acts on all-trans retinal and all-trans retinoic acid. The replacement of 11-cis retinal chromophore in photopigments with 11-cis 3,4-didehydroretinal enhances sensitivity to long-wavelength light. This may improve vision in fresh water which is often turbid. The polypeptide is Cytochrome P450 27C1 (cyp27c1) (Danio rerio (Zebrafish)).